We begin with the raw amino-acid sequence, 213 residues long: Gas vesicle protein F (213 aa).

This sequence belongs to the gas vesicle GvpF/GvpL family. In terms of assembly, binds GvpA.

The protein resides in the gas vesicle. Functionally, a minor component of the gas vesicle, may be involved in preventing GvpA aggregation during gas vesicle nucleation. Gas vesicles are hollow, gas filled proteinaceous nanostructures found in some microorganisms. They allow positioning of halobacteria at the optimal depth for growth in the poorly aerated, shallow brine pools of their habitat. In terms of biological role, expression of a 9.5 kb mc-vac DNA fragment containing 2 divergently transcribed regions (gvpD-gvpE-gvpF-gvpG-gvpH-gvpI-gvpJ-gvpK-gvpL-gvpM and gvpA-gvpC-gvpN-gvpO) allows H.volcanii to produce gas vesicles. The sequence is that of Gas vesicle protein F from Haloferax mediterranei (strain ATCC 33500 / DSM 1411 / JCM 8866 / NBRC 14739 / NCIMB 2177 / R-4) (Halobacterium mediterranei).